A 166-amino-acid polypeptide reads, in one-letter code: Urease accessory protein UreE (166 aa).

Residues F132–P156 are disordered.

It belongs to the UreE family.

The protein localises to the cytoplasm. In terms of biological role, involved in urease metallocenter assembly. Binds nickel. Probably functions as a nickel donor during metallocenter assembly. The chain is Urease accessory protein UreE from Pseudomonas fluorescens (strain ATCC BAA-477 / NRRL B-23932 / Pf-5).